The chain runs to 130 residues: Small ribosomal subunit protein uS8 (130 aa).

It belongs to the universal ribosomal protein uS8 family. In terms of assembly, part of the 30S ribosomal subunit.

Its function is as follows. One of the primary rRNA binding proteins, it binds directly to 16S rRNA central domain where it helps coordinate assembly of the platform of the 30S subunit. In Pyrobaculum arsenaticum (strain DSM 13514 / JCM 11321 / PZ6), this protein is Small ribosomal subunit protein uS8.